Here is a 164-residue protein sequence, read N- to C-terminus: Cell division protein SepF (164 aa).

The interval 21 to 71 (YQQGQQPAQQQQSPVQAVPTPVPAPQQQAKRAPVTPLHKPSTTTRNAAPAE) is disordered. Low complexity predominate over residues 22 to 49 (QQGQQPAQQQQSPVQAVPTPVPAPQQQA).

The protein belongs to the SepF family. As to quaternary structure, homodimer. Interacts with FtsZ.

It localises to the cytoplasm. Its function is as follows. Cell division protein that is part of the divisome complex and is recruited early to the Z-ring. Probably stimulates Z-ring formation, perhaps through the cross-linking of FtsZ protofilaments. Its function overlaps with FtsA. The polypeptide is Cell division protein SepF (Clavibacter sepedonicus (Clavibacter michiganensis subsp. sepedonicus)).